An 87-amino-acid polypeptide reads, in one-letter code: Large ribosomal subunit protein bL27 (87 aa).

The segment at 1–20 is disordered; the sequence is MARKRGGSGSKNGRDSNPKY.

It belongs to the bacterial ribosomal protein bL27 family.

This is Large ribosomal subunit protein bL27 (rpmA) from Treponema pallidum (strain Nichols).